Consider the following 195-residue polypeptide: uncharacterized protein (195 aa).

One can recognise an HTH tetR-type domain in the interval 6-66 (VESRKRLLKA…ELITDFHSRV (61 aa)). Positions 29-48 (KVSEIVKKAGFTQPSFYLYF) form a DNA-binding region, H-T-H motif.

This is an uncharacterized protein from Bacillus subtilis (strain 168).